We begin with the raw amino-acid sequence, 261 residues long: MSESLHLTRNGSILEITLDRPKANAIDAKTSFEMGEVFLNFRDDPQLRVAIITGAGEKFFSAGWDLKAAAEGEAPDADFGPGGFAGLTEIFNLDKPVIAAVNGYAFGGGFELALAADFIVCADNASFALPEAKLGIVPDSGGVLRLPKILPPTIVNEMVMTGRRMGAEEALRWGIVNRVVSQAELMDNARELAQQLVNSAPLAIAALKEIYRTTSEMPVEEAYRYIRSGVLKHYPSVLHSEDAIEGPLAFAEKRDPVWKGR.

Glutamate 111 functions as the Nucleophile in the catalytic mechanism. Glutamate 131 acts as the Proton acceptor in catalysis.

Belongs to the enoyl-CoA hydratase/isomerase family.

The catalysed reaction is (R)-carnitinyl-CoA = crotonobetainyl-CoA + H2O. It participates in amine and polyamine metabolism; carnitine metabolism. Its function is as follows. Catalyzes the reversible dehydration of L-carnitinyl-CoA to crotonobetainyl-CoA. The sequence is that of Carnitinyl-CoA dehydratase from Shigella flexneri.